The sequence spans 400 residues: Peptidase M20 domain-containing protein C757.05c (400 aa).

Residues 1 to 25 (MTMKISVWSLLIVIGYHLWMSPVLA) form the signal peptide. The N-linked (GlcNAc...) asparagine glycan is linked to asparagine 80. Aspartate 152 contacts Zn(2+). The active-site Proton acceptor is the glutamate 186. Position 187 (glutamate 187) interacts with Zn(2+).

Belongs to the peptidase M20A family. It depends on Zn(2+) as a cofactor.

The protein localises to the secreted. The protein is Peptidase M20 domain-containing protein C757.05c of Schizosaccharomyces pombe (strain 972 / ATCC 24843) (Fission yeast).